The chain runs to 428 residues: Dihydroorotase (428 aa).

Zn(2+) is bound by residues histidine 59 and histidine 61. Substrate is bound by residues 61-63 and asparagine 93; that span reads HLR. Zn(2+)-binding residues include aspartate 151, histidine 178, and histidine 231. Asparagine 277 contacts substrate. Aspartate 304 provides a ligand contact to Zn(2+). Residue aspartate 304 is part of the active site. Substrate-binding positions include histidine 308 and 322 to 323; that span reads FG.

It belongs to the metallo-dependent hydrolases superfamily. DHOase family. Class I DHOase subfamily. Requires Zn(2+) as cofactor.

The enzyme catalyses (S)-dihydroorotate + H2O = N-carbamoyl-L-aspartate + H(+). Its pathway is pyrimidine metabolism; UMP biosynthesis via de novo pathway; (S)-dihydroorotate from bicarbonate: step 3/3. In terms of biological role, catalyzes the reversible cyclization of carbamoyl aspartate to dihydroorotate. The protein is Dihydroorotase of Bacillus cytotoxicus (strain DSM 22905 / CIP 110041 / 391-98 / NVH 391-98).